Here is a 464-residue protein sequence, read N- to C-terminus: Ubiquinone biosynthesis monooxygenase COQ6, mitochondrial (464 aa).

The N-terminal 24 residues, 1 to 24 (MRCLGGSSLSRLLRMLSQSQGRAL), are a transit peptide targeting the mitochondrion.

This sequence belongs to the UbiH/COQ6 family. In terms of assembly, component of a multi-subunit COQ enzyme complex, composed of at least coq3, coq4, coq5, coq6, coq7 and coq9. Interacts with coq8b and coq7. The cofactor is FAD.

The protein resides in the mitochondrion inner membrane. It localises to the golgi apparatus. The protein localises to the cell projection. It carries out the reaction a 4-hydroxy-3-(all-trans-polyprenyl)benzoate + 2 reduced [2Fe-2S]-[ferredoxin] + O2 + 2 H(+) = a 3,4-dihydroxy-5-(all-trans-polyprenyl)benzoate + 2 oxidized [2Fe-2S]-[ferredoxin] + H2O. It catalyses the reaction a 2-methoxy-6-(all-trans-polyprenyl)phenol + 2 reduced [2Fe-2S]-[ferredoxin] + O2 + 2 H(+) = a 2-methoxy-6-(all-trans-polyprenyl)benzene-1,4-diol + 2 oxidized [2Fe-2S]-[ferredoxin] + H2O. It participates in cofactor biosynthesis; ubiquinone biosynthesis. Its function is as follows. FAD-dependent monooxygenase required for two non-consecutive steps during ubiquinone biosynthesis. Required for the C5-ring hydroxylation during ubiquinone biosynthesis by catalyzing the hydroxylation of 4-hydroxy-3-(all-trans-polyprenyl)benzoic acid to 3,4-dihydroxy-5-(all-trans-polyprenyl)benzoic acid. Also acts downstream of coq4, for the C1-hydroxylation during ubiquinone biosynthesis by catalyzing the hydroxylation of 2-methoxy-6-(all-trans-polyprenyl)phenol to 2-methoxy-6-(all-trans-polyprenyl)benzene-1,4-diol. The electrons required for the hydroxylation reaction are funneled indirectly to coq6 from NADPH via a ferredoxin/ferredoxin reductase system. In Xenopus tropicalis (Western clawed frog), this protein is Ubiquinone biosynthesis monooxygenase COQ6, mitochondrial.